A 378-amino-acid chain; its full sequence is D-alanine--D-alanine ligase (378 aa).

Residues 141-347 (KKLLTLNGIR…YSELIDQLIQ (207 aa)) enclose the ATP-grasp domain. Residue 171–226 (AEELGETLFVKPARQGSSVGIHKVRNEEEYNAALEDGFKYDYKILVEEAIKNPREV) participates in ATP binding. Mg(2+) contacts are provided by D301, E314, and N316.

This sequence belongs to the D-alanine--D-alanine ligase family. Mg(2+) is required as a cofactor. It depends on Mn(2+) as a cofactor.

The protein resides in the cytoplasm. The catalysed reaction is 2 D-alanine + ATP = D-alanyl-D-alanine + ADP + phosphate + H(+). It participates in cell wall biogenesis; peptidoglycan biosynthesis. In terms of biological role, cell wall formation. The polypeptide is D-alanine--D-alanine ligase (Ligilactobacillus salivarius (strain UCC118) (Lactobacillus salivarius)).